The sequence spans 236 residues: Rab-like protein 3 (236 aa).

Positions 1-235 (MASLDRVKVL…GGGALKNFHC (235 aa)) are small GTPase-like. Residues 16–21 (GVGKSS), 148–150 (KLD), and 179–180 (DC) each bind GTP.

Belongs to the small GTPase superfamily. Rab family. Homodimer. Interacts with GPR89; the interaction stabilizes GPR89. Interacts with RAP1GDS1.

Its function is as follows. Required for KRAS signaling regulation and modulation of cell proliferation. Regulator of KRAS prenylation, and probably prenylation of other small GTPases. Required for lymphocyte development and function. Not required for myeloid cell development. This is Rab-like protein 3 (Rabl3) from Mus musculus (Mouse).